We begin with the raw amino-acid sequence, 349 residues long: Palmitoyltransferase PFA5 (349 aa).

A run of 2 helical transmembrane segments spans residues 19–39 and 57–77; these read LIPF…CHQF and LIIV…LMLV. In terms of domain architecture, DHHC spans 126–176; it reads IWCSNCQSLKMSRTHHSTKVGYCVPRFDHYCVWIGTVLGRLNYKLFVQFTF. Cys156 functions as the S-palmitoyl cysteine intermediate in the catalytic mechanism. Helical transmembrane passes span 170–190 and 204–224; these read LFVQ…ISIA and VYAV…LFLT.

It belongs to the DHHC palmitoyltransferase family. PFA5 subfamily.

The protein resides in the membrane. The catalysed reaction is L-cysteinyl-[protein] + hexadecanoyl-CoA = S-hexadecanoyl-L-cysteinyl-[protein] + CoA. This Kluyveromyces lactis (strain ATCC 8585 / CBS 2359 / DSM 70799 / NBRC 1267 / NRRL Y-1140 / WM37) (Yeast) protein is Palmitoyltransferase PFA5 (PFA5).